We begin with the raw amino-acid sequence, 278 residues long: Biotin synthase (278 aa).

Positions 1–227 (MQIMLCAISN…QSVVMVAGGR (227 aa)) constitute a Radical SAM core domain. Cys16, Cys20, and Cys23 together coordinate [4Fe-4S] cluster. Cys60, Cys95, and Cys153 together coordinate [2Fe-2S] cluster.

This sequence belongs to the radical SAM superfamily. Biotin synthase family. Homodimer. The cofactor is [4Fe-4S] cluster. [2Fe-2S] cluster is required as a cofactor.

It catalyses the reaction (4R,5S)-dethiobiotin + (sulfur carrier)-SH + 2 reduced [2Fe-2S]-[ferredoxin] + 2 S-adenosyl-L-methionine = (sulfur carrier)-H + biotin + 2 5'-deoxyadenosine + 2 L-methionine + 2 oxidized [2Fe-2S]-[ferredoxin]. It participates in cofactor biosynthesis; biotin biosynthesis; biotin from 7,8-diaminononanoate: step 2/2. Its function is as follows. Catalyzes the conversion of dethiobiotin (DTB) to biotin by the insertion of a sulfur atom into dethiobiotin via a radical-based mechanism. The chain is Biotin synthase from Campylobacter jejuni subsp. doylei (strain ATCC BAA-1458 / RM4099 / 269.97).